Here is a 109-residue protein sequence, read N- to C-terminus: Sperm-specific class P protein 10 (109 aa).

The MSP domain maps to 2–109 (SLTADPPACT…TVTIPMSATA (108 aa)).

In terms of tissue distribution, expressed at higher level in testis.

This Caenorhabditis elegans protein is Sperm-specific class P protein 10 (ssp-10).